The sequence spans 218 residues: N-(5'-phosphoribosyl)anthranilate isomerase (218 aa).

The protein belongs to the TrpF family.

The catalysed reaction is N-(5-phospho-beta-D-ribosyl)anthranilate = 1-(2-carboxyphenylamino)-1-deoxy-D-ribulose 5-phosphate. The protein operates within amino-acid biosynthesis; L-tryptophan biosynthesis; L-tryptophan from chorismate: step 3/5. The chain is N-(5'-phosphoribosyl)anthranilate isomerase from Bacillus licheniformis (strain ATCC 14580 / DSM 13 / JCM 2505 / CCUG 7422 / NBRC 12200 / NCIMB 9375 / NCTC 10341 / NRRL NRS-1264 / Gibson 46).